A 1018-amino-acid chain; its full sequence is Cell wall protein 1 (1018 aa).

A signal peptide spans 1–17; it reads MLPSIVISIVLASFVSA. Residues 32-143 form the CFEM 1 domain; sequence NPYTIYPSVA…SSLSAAATAV (112 aa). 4 disulfide bridges follow: Cys60–Cys100, Cys64–Cys95, Cys74–Cys81, and Cys83–Cys116. Asp78 is a binding site for heme. Residues 147-227 form a disordered region; sequence SEQPVETSSE…STPEDNPYTI (81 aa). The span at 148–164 shows a compositional bias: polar residues; it reads EQPVETSSEPAGSSQSV. Positions 165-221 are enriched in low complexity; the sequence is ESSQPAETSSSEPAETSSSEPAETSSETSSEQPASSEPAETSSEESSTITSAPSTPE. CFEM domains lie at 223 to 334 and 393 to 504; these read NPYT…ATAV and SSSS…ATAV. Intrachain disulfides connect Cys251-Cys291, Cys255-Cys286, Cys265-Cys272, and Cys274-Cys307. Asp269 is a heme binding site. The tract at residues 338-396 is disordered; sequence SEQSVETSSESAESSQSVESSQPAETSSEQPSETSSETSSQQLSSITSAPDSSATSSSS. Cystine bridges form between Cys421–Cys461, Cys425–Cys456, Cys435–Cys442, and Cys444–Cys477. Position 439 (Asp439) interacts with heme. Positions 507–557 are disordered; that stretch reads SDSASETASQEPSETSSEQPSETASQQPAETSSEESSTITSAPSTPEDNPY. A compositionally biased stretch (low complexity) spans 509–553; the sequence is SASETASQEPSETSSEQPSETASQQPAETSSEESSTITSAPSTPE. The 112-residue stretch at 555–666 folds into the CFEM 4 domain; that stretch reads NPYTIYPSVA…SSLNAAATAV (112 aa). Disulfide bonds link Cys583–Cys623, Cys587–Cys618, Cys597–Cys604, and Cys606–Cys639. Residue Asp601 coordinates heme. The tract at residues 677–785 is disordered; the sequence is SASESASQVP…STSTKSDAAS (109 aa). The segment covering 690 to 766 has biased composition (low complexity); the sequence is SAASSQSANN…AISESVAPSS (77 aa). Asn698, Asn708, Asn718, Asn729, Asn743, Asn753, Asn769, Asn798, and Asn965 each carry an N-linked (GlcNAc...) asparagine glycan. A compositionally biased stretch (polar residues) spans 767 to 785; that stretch reads YGNSTIAQPSTSTKSDAAS. Ser989 carries GPI-anchor amidated serine lipidation. A propeptide spans 990-1018 (removed in mature form); that stretch reads VAIANMANTKFASTMSLLVASFVFVGLFI.

Belongs to the RBT5 family. In terms of processing, the GPI-anchor is attached to the protein in the endoplasmic reticulum and serves to target the protein to the cell surface. There, the glucosamine-inositol phospholipid moiety is cleaved off and the GPI-modified mannoprotein is covalently attached via its lipidless GPI glycan remnant to the 1,6-beta-glucan of the outer cell wall layer.

Its subcellular location is the secreted. It is found in the cell wall. The protein resides in the membrane. Functionally, heme-binding protein involved in heme-iron utilization. The ability to acquire iron from host tissues is a major virulence factor of pathogenic microorganisms. Required for biofilm formation. The polypeptide is Cell wall protein 1 (CSA1) (Candida albicans (strain SC5314 / ATCC MYA-2876) (Yeast)).